Here is a 331-residue protein sequence, read N- to C-terminus: Vitamin B12 import system permease protein BtuC (331 aa).

9 consecutive transmembrane segments (helical) span residues 20 to 42, 62 to 84, 91 to 113, 117 to 136, 148 to 170, 190 to 209, 240 to 262, 277 to 299, and 306 to 325; these read LLIG…WLSP, LLAA…VLLG, GVVG…FPSL, VAFM…LLVV, LLLV…FYFS, SWYQ…WLVL, LAIA…VGLV, LLLP…IARL, and LPLG…WMLV.

This sequence belongs to the binding-protein-dependent transport system permease family. FecCD subfamily. The complex is composed of two ATP-binding proteins (BtuD), two transmembrane proteins (BtuC) and a solute-binding protein (BtuF).

The protein localises to the cell inner membrane. In terms of biological role, part of the ABC transporter complex BtuCDF involved in vitamin B12 import. Involved in the translocation of the substrate across the membrane. This chain is Vitamin B12 import system permease protein BtuC, found in Vibrio cholerae serotype O1 (strain ATCC 39315 / El Tor Inaba N16961).